Consider the following 247-residue polypeptide: Ubiquinone biosynthesis O-methyltransferase (247 aa).

S-adenosyl-L-methionine contacts are provided by Arg39, Gly70, Asp91, and Met134.

It belongs to the methyltransferase superfamily. UbiG/COQ3 family.

The catalysed reaction is a 3-demethylubiquinol + S-adenosyl-L-methionine = a ubiquinol + S-adenosyl-L-homocysteine + H(+). It catalyses the reaction a 3-(all-trans-polyprenyl)benzene-1,2-diol + S-adenosyl-L-methionine = a 2-methoxy-6-(all-trans-polyprenyl)phenol + S-adenosyl-L-homocysteine + H(+). The protein operates within cofactor biosynthesis; ubiquinone biosynthesis. In terms of biological role, O-methyltransferase that catalyzes the 2 O-methylation steps in the ubiquinone biosynthetic pathway. In Cereibacter sphaeroides (strain ATCC 17029 / ATH 2.4.9) (Rhodobacter sphaeroides), this protein is Ubiquinone biosynthesis O-methyltransferase.